Here is an 85-residue protein sequence, read N- to C-terminus: Defensin-like protein 112 (85 aa).

The N-terminal stretch at Met-1–Cys-24 is a signal peptide. 4 disulfides stabilise this stretch: Cys-40–Cys-80, Cys-46–Cys-71, Cys-56–Cys-78, and Cys-60–Cys-79.

It belongs to the DEFL family.

It localises to the secreted. This chain is Defensin-like protein 112, found in Arabidopsis thaliana (Mouse-ear cress).